A 451-amino-acid polypeptide reads, in one-letter code: Phosphoglucosamine mutase (451 aa).

Ser-101 (phosphoserine intermediate) is an active-site residue. The Mg(2+) site is built by Ser-101, Asp-241, Asp-243, and Asp-245. Ser-101 carries the post-translational modification Phosphoserine.

It belongs to the phosphohexose mutase family. Mg(2+) is required as a cofactor. In terms of processing, activated by phosphorylation.

The enzyme catalyses alpha-D-glucosamine 1-phosphate = D-glucosamine 6-phosphate. Functionally, catalyzes the conversion of glucosamine-6-phosphate to glucosamine-1-phosphate. This is Phosphoglucosamine mutase from Exiguobacterium sibiricum (strain DSM 17290 / CCUG 55495 / CIP 109462 / JCM 13490 / 255-15).